The sequence spans 101 residues: Small ribosomal subunit protein uS14 (101 aa).

The segment at Met1–Asp20 is disordered.

This sequence belongs to the universal ribosomal protein uS14 family. In terms of assembly, part of the 30S ribosomal subunit. Contacts proteins S3 and S10.

Binds 16S rRNA, required for the assembly of 30S particles and may also be responsible for determining the conformation of the 16S rRNA at the A site. The protein is Small ribosomal subunit protein uS14 of Rhodospirillum rubrum (strain ATCC 11170 / ATH 1.1.1 / DSM 467 / LMG 4362 / NCIMB 8255 / S1).